Here is a 582-residue protein sequence, read N- to C-terminus: Glutaredoxin domain-containing cysteine-rich protein CG12206 (582 aa).

Residues 217-227 (CETLDSGTGSD) show a composition bias toward polar residues. 2 disordered regions span residues 217–244 (CETL…VRSP) and 260–300 (EADH…SCDS). The segment covering 291–300 (SSNSSLSCDS) has biased composition (low complexity). Residues 423–528 (NVKNYMEKDV…QLLRPYKSIA (106 aa)) form the Glutaredoxin domain.

The protein belongs to the GRXCR1 family.

The polypeptide is Glutaredoxin domain-containing cysteine-rich protein CG12206 (Drosophila melanogaster (Fruit fly)).